A 575-amino-acid polypeptide reads, in one-letter code: Mitochondrial 2-methylisocitrate lyase ICL2 (575 aa).

Residue Cys-238 is part of the active site.

Belongs to the isocitrate lyase/PEP mutase superfamily. Isocitrate lyase family.

Its subcellular location is the mitochondrion matrix. The catalysed reaction is (2S,3R)-3-hydroxybutane-1,2,3-tricarboxylate = pyruvate + succinate. The protein operates within organic acid metabolism; propanoate degradation. In terms of biological role, catalyzes the formation of pyruvate and succinate from 2-methylisocitrate during the metabolism of endogenous propionyl-CoA. Does not act on isocitrate. This chain is Mitochondrial 2-methylisocitrate lyase ICL2 (ICL2), found in Saccharomyces cerevisiae (strain ATCC 204508 / S288c) (Baker's yeast).